We begin with the raw amino-acid sequence, 461 residues long: D-phenylhydantoinase (461 aa).

The a divalent metal cation site is built by His-59, His-61, and Lys-151. The residue at position 151 (Lys-151) is an N6-carboxylysine. Residue Tyr-156 coordinates substrate. Residues His-182 and His-239 each coordinate a divalent metal cation. A substrate-binding site is contributed by Ser-286. Asp-313 is an a divalent metal cation binding site. Residue Asn-335 coordinates substrate.

Belongs to the metallo-dependent hydrolases superfamily. Hydantoinase/dihydropyrimidinase family. As to quaternary structure, homotetramer. A divalent metal cation is required as a cofactor. Carboxylation allows a single lysine to coordinate two divalent metal cations.

It carries out the reaction D-5-phenylhydantoin + H2O = N-carbamoyl-D-phenylglycine + H(+). Catalyzes the stereospecific hydrolysis of the cyclic amide bond of D-hydantoin derivatives with an aromatic side chains at the 5'-position. Has no activity on dihydropyrimidines. The physiological function is unknown. This is D-phenylhydantoinase from Escherichia coli (strain UTI89 / UPEC).